Consider the following 197-residue polypeptide: Dephospho-CoA kinase (197 aa).

The DPCK domain occupies 2 to 197 (RIGLTGGIAS…YDALAKTAHE (196 aa)). An ATP-binding site is contributed by 10-15 (ASGKSL).

Belongs to the CoaE family.

Its subcellular location is the cytoplasm. The enzyme catalyses 3'-dephospho-CoA + ATP = ADP + CoA + H(+). The protein operates within cofactor biosynthesis; coenzyme A biosynthesis; CoA from (R)-pantothenate: step 5/5. Functionally, catalyzes the phosphorylation of the 3'-hydroxyl group of dephosphocoenzyme A to form coenzyme A. The protein is Dephospho-CoA kinase of Shouchella clausii (strain KSM-K16) (Alkalihalobacillus clausii).